Here is a 250-residue protein sequence, read N- to C-terminus: HTH-type transcriptional regulator KipR (250 aa).

In terms of domain architecture, HTH iclR-type spans 5–65 (NKTVVKSMAL…DASGAYSLGL (61 aa)). Positions 26–45 (LSELVSLTGMPKTSVHRMVS) form a DNA-binding region, H-T-H motif. Residues 80–249 (IRKIAKPVME…ALQISRKIGY (170 aa)) form the IclR-ED domain.

Transcriptional repressor of the kip gene-containing operon. In Bacillus subtilis (strain 168), this protein is HTH-type transcriptional regulator KipR (kipR).